The primary structure comprises 130 residues: Small ribosomal subunit protein uS11 (130 aa).

This sequence belongs to the universal ribosomal protein uS11 family. Part of the 30S ribosomal subunit. Interacts with proteins S7 and S18. Binds to IF-3.

In terms of biological role, located on the platform of the 30S subunit, it bridges several disparate RNA helices of the 16S rRNA. Forms part of the Shine-Dalgarno cleft in the 70S ribosome. The sequence is that of Small ribosomal subunit protein uS11 from Syntrophomonas wolfei subsp. wolfei (strain DSM 2245B / Goettingen).